The primary structure comprises 395 residues: Vomeronasal type-1 receptor 2 (395 aa).

The helical transmembrane segment at 12–32 threads the bilayer; that stretch reads LYPINISAAWHLGPLPVSCFV. The Extracellular segment spans residues 33 to 51; that stretch reads SNKYQCSLAFGATTGLRVL. Residues 52–72 form a helical membrane-spanning segment; sequence VVVVPQTQLSFLSSLCLVSLF. The Cytoplasmic portion of the chain corresponds to 73-93; sequence LHSLVSAHGEKPTKPVGLDPT. Residues 94-114 form a helical membrane-spanning segment; that stretch reads LFQVVVGILGNFSLLYYYMFL. Residues 115-170 lie on the Extracellular side of the membrane; sequence YFRGYKPRSTDLILRHLTVADSLVILSKRIPETMATFGLKHFDNYFGCKFLLYAHR. The helical transmembrane segment at 171–191 threads the bilayer; the sequence is VGRGVSIGSTCLLSVFQVITI. Over 192 to 208 the chain is Cytoplasmic; that stretch reads NPRNSRWAEMKVKAPTY. Residues 209 to 229 traverse the membrane as a helical segment; the sequence is IGLSNILCWAFHMLVNAIFPI. The Extracellular segment spans residues 230-267; that stretch reads YTTGKWSNNNITKKGDLGYCSAPLSDEVTKSVYAALTS. N-linked (GlcNAc...) asparagine glycosylation occurs at asparagine 239. The helical transmembrane segment at 268–288 threads the bilayer; that stretch reads FHDVLCLGLMLWASSSIVLVL. Topologically, residues 289–316 are cytoplasmic; the sequence is YRHKQQVQHICRNNLYPNSSPGNRAIQS. Residues 317 to 337 traverse the membrane as a helical segment; the sequence is ILALVSTFALCYALSFITYVY. The Extracellular portion of the chain corresponds to 338–346; it reads LALFDNSSW. The N-linked (GlcNAc...) asparagine glycan is linked to asparagine 343. Residues 347 to 367 form a helical membrane-spanning segment; it reads WLVNTAALIIACFPTISPFVL. Residues 368 to 395 are Cytoplasmic-facing; the sequence is MCRDPSRSRLCSICCRRNRRFFHDFRKM.

It belongs to the G-protein coupled receptor 1 family.

It localises to the cell membrane. Functionally, putative pheromone receptor. The chain is Vomeronasal type-1 receptor 2 (VN1R2) from Homo sapiens (Human).